The chain runs to 382 residues: S-adenosylmethionine synthase (382 aa).

Position 16 (His16) interacts with ATP. Asp18 contributes to the Mg(2+) binding site. Glu44 contacts K(+). Residues Glu57 and Gln100 each coordinate L-methionine. Positions 100–110 (QSADIAMGVDE) are flexible loop. ATP contacts are provided by residues 165 to 167 (DAK), Asp240, 246 to 247 (RK), Ala263, and Lys267. Asp240 provides a ligand contact to L-methionine. Lys271 contacts L-methionine.

Belongs to the AdoMet synthase family. Homotetramer; dimer of dimers. Mg(2+) is required as a cofactor. K(+) serves as cofactor.

Its subcellular location is the cytoplasm. It catalyses the reaction L-methionine + ATP + H2O = S-adenosyl-L-methionine + phosphate + diphosphate. It functions in the pathway amino-acid biosynthesis; S-adenosyl-L-methionine biosynthesis; S-adenosyl-L-methionine from L-methionine: step 1/1. Functionally, catalyzes the formation of S-adenosylmethionine (AdoMet) from methionine and ATP. The overall synthetic reaction is composed of two sequential steps, AdoMet formation and the subsequent tripolyphosphate hydrolysis which occurs prior to release of AdoMet from the enzyme. In Saccharophagus degradans (strain 2-40 / ATCC 43961 / DSM 17024), this protein is S-adenosylmethionine synthase.